The sequence spans 201 residues: Molybdenum cofactor guanylyltransferase (201 aa).

GTP contacts are provided by residues 14-16 (LAG), Lys-31, and Asp-104. Asp-104 contacts Mg(2+).

It belongs to the MobA family. Monomer. Mg(2+) is required as a cofactor.

It localises to the cytoplasm. The catalysed reaction is Mo-molybdopterin + GTP + H(+) = Mo-molybdopterin guanine dinucleotide + diphosphate. Transfers a GMP moiety from GTP to Mo-molybdopterin (Mo-MPT) cofactor (Moco or molybdenum cofactor) to form Mo-molybdopterin guanine dinucleotide (Mo-MGD) cofactor. The chain is Molybdenum cofactor guanylyltransferase from Helicobacter pylori (strain G27).